The sequence spans 179 residues: Large ribosomal subunit protein uL5 (179 aa).

It belongs to the universal ribosomal protein uL5 family. In terms of assembly, part of the 50S ribosomal subunit; part of the 5S rRNA/L5/L18/L25 subcomplex. Contacts the 5S rRNA and the P site tRNA. Forms a bridge to the 30S subunit in the 70S ribosome.

Functionally, this is one of the proteins that bind and probably mediate the attachment of the 5S RNA into the large ribosomal subunit, where it forms part of the central protuberance. In the 70S ribosome it contacts protein S13 of the 30S subunit (bridge B1b), connecting the 2 subunits; this bridge is implicated in subunit movement. Contacts the P site tRNA; the 5S rRNA and some of its associated proteins might help stabilize positioning of ribosome-bound tRNAs. The sequence is that of Large ribosomal subunit protein uL5 from Photorhabdus laumondii subsp. laumondii (strain DSM 15139 / CIP 105565 / TT01) (Photorhabdus luminescens subsp. laumondii).